Consider the following 596-residue polypeptide: Transcription factor COE3 (596 aa).

The disordered stretch occupies residues 1 to 22 (MFGIQENIPRGGTTMKEEPLGS). The interval 63 to 66 (RKSN) is interaction with DNA. The segment at 151–170 (CRVLLTHEIMCSRCCDKKSC) adopts a C5-type zinc-finger fold. Interaction with DNA regions lie at residues 197-204 (NCLKNAGN) and 236-239 (NNSK). One can recognise an IPT/TIG domain in the interval 263–346 (PCIKAISPSE…KGAPGRFVYT (84 aa)). The disordered stretch occupies residues 451-483 (TSQANDQVGYSRNTSSVSPRGYVPSSTPQQSNY).

The protein belongs to the COE family. As to quaternary structure, forms either a homodimer or a heterodimer with a related family member. Expressed in brain.

The protein resides in the nucleus. Its function is as follows. Transcriptional activator. Recognizes variations of the palindromic sequence 5'-ATTCCCNNGGGAATT-3'. The sequence is that of Transcription factor COE3 (EBF3) from Homo sapiens (Human).